The following is a 164-amino-acid chain: 3-hydroxyacyl-[acyl-carrier-protein] dehydratase FabZ (164 aa).

Histidine 70 is a catalytic residue.

This sequence belongs to the thioester dehydratase family. FabZ subfamily.

It localises to the cytoplasm. The catalysed reaction is a (3R)-hydroxyacyl-[ACP] = a (2E)-enoyl-[ACP] + H2O. In terms of biological role, involved in unsaturated fatty acids biosynthesis. Catalyzes the dehydration of short chain beta-hydroxyacyl-ACPs and long chain saturated and unsaturated beta-hydroxyacyl-ACPs. This is 3-hydroxyacyl-[acyl-carrier-protein] dehydratase FabZ from Synechocystis sp. (strain ATCC 27184 / PCC 6803 / Kazusa).